Consider the following 351-residue polypeptide: Methylthioribose-1-phosphate isomerase (351 aa).

Residues 51 to 53 (RGA), Arg-94, and Gln-199 contribute to the substrate site. Residue Asp-240 is the Proton donor of the active site. 250-251 (NK) serves as a coordination point for substrate.

It belongs to the eIF-2B alpha/beta/delta subunits family. MtnA subfamily. In terms of assembly, homodimer.

It carries out the reaction 5-(methylsulfanyl)-alpha-D-ribose 1-phosphate = 5-(methylsulfanyl)-D-ribulose 1-phosphate. The protein operates within amino-acid biosynthesis; L-methionine biosynthesis via salvage pathway; L-methionine from S-methyl-5-thio-alpha-D-ribose 1-phosphate: step 1/6. Its function is as follows. Catalyzes the interconversion of methylthioribose-1-phosphate (MTR-1-P) into methylthioribulose-1-phosphate (MTRu-1-P). The chain is Methylthioribose-1-phosphate isomerase from Bacillus cereus (strain ATCC 10987 / NRS 248).